We begin with the raw amino-acid sequence, 583 residues long: Inactive tyrosine-protein kinase RYK (583 aa).

An N-terminal signal peptide occupies residues 1-18; that stretch reads MILRYLIFFAQLWALCLA. The Extracellular portion of the chain corresponds to 19–173; the sequence is NVNMFISKEE…EVDDTDSIDK (155 aa). The WIF domain maps to 22 to 147; the sequence is MFISKEEMNR…KVKLRQEKIC (126 aa). N30 and N46 each carry an N-linked (GlcNAc...) asparagine glycan. The cysteines at positions 113 and 147 are disulfide-linked. A helical membrane pass occupies residues 174–194; sequence AFFVIICIAAAFLLIVAATLI. At 195 to 583 the chain is on the cytoplasmic side; sequence CYFKRSKKED…DFNIQLSQYI (389 aa). In terms of domain architecture, Protein kinase spans 281–583; that stretch reads FQSLPLDMEG…DFNIQLSQYI (303 aa). ATP is bound by residues 287–295 and K327; that span reads DMEGTFGEV.

This sequence belongs to the protein kinase superfamily. Tyr protein kinase family.

The protein resides in the cell membrane. It is found in the basolateral cell membrane. Functionally, has no detectable kinase activity in vitro and is unlikely to function as a tyrosine kinase in vivo. Receptor which may act as a receptor for Wnt ligand mom-2. Plays a role in controlling P7.p vulva precursor cell lineage orientation during vulva development. Regulates pop-1 asymmetric distribution in P7.p and its daughter cells. Plays a role in the migration of ALM neurons during embryogenesis. This Caenorhabditis elegans protein is Inactive tyrosine-protein kinase RYK.